The sequence spans 2116 residues: Non-structural polyprotein p200 (2116 aa).

Residues 36-49 (EVRDVVTAAQKRAI) form a required for efficient proteolysis and P150-P90 interaction region. The Alphavirus-like MT domain maps to 57-247 (VFTQMQVSDH…TRPCTTRIYQ (191 aa)). Residues 715-779 (GQLAATSPPP…PVPPTTAEPA (65 aa)) form a disordered region. Pro residues-rich tracts occupy residues 721-730 (SPPPGDPPPP) and 745-775 (TPPPAPVRDPPRPQPSPPAPPRVGDPVPPTT). 3 short sequence motifs (pxxPxR; class II SH3-binding) span residues 727–732 (PPPPRR), 747–752 (PPAPVR), and 761–766 (PPAPPR). Residues 806 to 985 (SDIVESYARA…LTHASVLVGA (180 aa)) form the Macro domain. The interval 992 to 1031 (VSPPPTEPLASCPAGDPGRPAQRSASPPATPLGDATAPEP) is disordered. A Peptidase C27 domain is found at 1000–1301 (LASCPAGDPG…WLAVPLSRGG (302 aa)). Cys-1152 serves as the catalytic For cysteine protease activity. The segment at 1152–1183 (CWLRAAANVAQAARACGAYTSAGCPKCAYGRA) is interaction with host CALM1. Zn(2+) is bound by residues Cys-1175, Cys-1178, Cys-1227, and His-1273. The interval 1193 to 1228 (FAALSQWWSASHADASPDGTGDPLDPLMETVGCACS) is EF-hand-like. The For cysteine protease activity role is filled by His-1273. Residues 1320–1468 (EVRRLGDDAM…VPDRWPTGRS (149 aa)) enclose the (+)RNA virus helicase ATP-binding domain. 1352–1359 (MAAGAGKT) serves as a coordination point for a ribonucleoside 5'-triphosphate. The 141-residue stretch at 1469–1609 (RHTWRFPDCW…ELKEVPAGID (141 aa)) folds into the (+)RNA virus helicase C-terminal domain. Residues 1700–1900 (YRAGEDGSTL…VELEISAALL (201 aa)) form an involved in P150-P90 interaction region. The RdRp catalytic domain maps to 1870–1981 (TNAIEVDFTE…FLPEGARNAA (112 aa)). The Human RB1 binding motif lies at 1902–1906 (LPCAE).

As to quaternary structure, interacts with RNA-directed RNA polymerase p90. Interacts with host CALM1; this interaction is necessary for the protease activity and viral infectivity. Interacts with host C1QBP. Interacts with the capsid protein. Interacts with human RB1/retinoblastoma protein. Interacts with protease/methyltransferase p150. It depends on Zn(2+) as a cofactor. Specific enzymatic cleavage by its own cysteine protease yield mature proteins p150 and p90.

It localises to the host membrane. It is found in the host cytoplasm. The protein localises to the host perinuclear region. The enzyme catalyses RNA(n) + a ribonucleoside 5'-triphosphate = RNA(n+1) + diphosphate. It carries out the reaction a ribonucleoside 5'-triphosphate + H2O = a ribonucleoside 5'-diphosphate + phosphate + H(+). It catalyses the reaction ATP + H2O = ADP + phosphate + H(+). In terms of biological role, probable principal replicase for the negative-strand DNA, which replicates the 40S (+) genomic RNA into (-) antigenomic RNA. It cannot replicate the (-) into (+) until cleaved into p150 and p90 mature proteins. Functionally, protease that cleaves the precursor polyprotein into two mature products. Together with RNA-directed RNA polymerase p90, replicates the 40S genomic and antigenomic RNA by recognizing replications specific signals. The heterodimer P150/p90 is probably the principal replicase for positive-strand genomic RNA and the 24S subgenomic RNA, which codes for structural proteins. Responsible for the mRNA-capping of the viral mRNAs. This function is necessary since all viral RNAs are synthesized in the cytoplasm, and host capping enzymes are restricted to the nucleus. Forms fibers late in the infection that may be involved in cell-to-cell spread of the virus RNA in the absence of virus particle formation. Its function is as follows. Together with protease/methyltransferase p150, replicates the 40S genomic and antigenomic RNA by recognizing replications specific signals. The heterodimer P150/p90 is probably the principal replicase for positive-strand genomic RNA and the 24S subgenomic RNA, which codes for structural proteins. A helicase activity is probably also present. This chain is Non-structural polyprotein p200, found in Rubella virus (strain M33) (RUBV).